A 540-amino-acid polypeptide reads, in one-letter code: NADH-ubiquinone oxidoreductase chain 4 (540 aa).

A run of 14 helical transmembrane segments spans residues 2–22 (TIIAISIMNVVIGIAILGVIL), 35–55 (IFILGVQGILIVLSGIMLIGC), 89–109 (ISAIFIFLTIILILSCNLISI), 118–138 (QKFQIMLLLTEILIINFFAAT), 140–160 (LVQLYIVYEATLIPMVIMIGV), 172–192 (FQILIYTLIGSIFMLMSIGIL), 218–238 (LIFIGFFIGFAVKIPIAPLHL), 248–268 (PTAGSVLLAGILLKLGGYGYI), 282–302 (YFPIIGGICLISILYTGIATL), 310–330 (IVAYSSISHMNVIVLGLFSGV), 338–358 (IILMIGHGVVSGGLFLCIGVI), 376–396 (VMPIMAILFFLLVLGNIAFPI), 415–435 (IIIAFFSALSMIVTAIYSFWL), and 501–521 (VNIFEFTSISLMVIMMIIIGM).

This sequence belongs to the complex I subunit 4 family.

The protein localises to the mitochondrion membrane. The enzyme catalyses a ubiquinone + NADH + 5 H(+)(in) = a ubiquinol + NAD(+) + 4 H(+)(out). Core subunit of the mitochondrial membrane respiratory chain NADH dehydrogenase (Complex I) that is believed to belong to the minimal assembly required for catalysis. Complex I functions in the transfer of electrons from NADH to the respiratory chain. The immediate electron acceptor for the enzyme is believed to be ubiquinone. This Dictyostelium discoideum (Social amoeba) protein is NADH-ubiquinone oxidoreductase chain 4 (nad4).